Consider the following 46-residue polypeptide: Mu-segestritoxin-Sf1g (46 aa).

Disulfide bonds link cysteine 3–cysteine 19, cysteine 10–cysteine 22, cysteine 18–cysteine 42, and cysteine 24–cysteine 40. The tract at residues 31–33 (RPW) is keys region for toxin activity.

This sequence belongs to the neurotoxin 16 (SFI) family. In terms of tissue distribution, expressed by the venom gland.

It localises to the secreted. Insecticidal toxin. It inhibits insect voltage-gated sodium channels (Nav) by partially blocking the channel pore in DUM neurons from the American cockroach, not by acting as a gating modifier. The inhibition is only partially reversible after prolonged washout. In vivo, the toxin causes flaccid paralysis followed by death when injected into Heliothis virescens larvae. It also causes uncoordinated movements followed by full paralysis to sheep blowflies (Lucilia cuprina). When the toxin is fused to snowdrop lectin, it is orally active against larvae of the tomato moth (Laconobia oleracea), the rice brown planthopper (Nilaparvata lugens), and the peach-potato aphid (Myzus persicae). This is Mu-segestritoxin-Sf1g from Segestria florentina (Tube-web spider).